The following is a 502-amino-acid chain: MLASIILSGWLLLAWLYFLWSRRRYYKVAWQLRGPIGWPLIGMGLQMMNPETFLQYMDGLSRQFKAPFISWMGTSCFLYINDPHSVEQILNSTHCTNKGDFYRFMSSAIGDGLFTSSSPRWHKHRRLINPAFGRQILSNFLPIFNAEAEVLLQKLELEGVQHGKRLEIYQILKKIVLEAACQTTMGKKMNFQHDGSLCIFKAYNGLTEVCVKRMLSPWLYPDLIYRRSGLFRLQQKVVGILFGFIEQLLEPIVSVVAANSNPDQQRSEMEMRGKSKAIFIEQVREHVERGQLSWQDVRDEANVTIAATFETTSTALYFTILCLAMHPCYQEKLHKELVTELPPSGDINLEQLQRLEYTEMVINEAMRLFAPVPMVLRSADQDIQLKRGDGEFLIPRGTQIGIDIYNMQRDERVWGPLSRTYNPDAHFGLDSPQRHAFAFVPFTKGLRMCIGYRYAQMLMKLLLARIFRSYRISTEARLEELLVKGNISLKLKDYPLCRVERR.

Cys-449 serves as a coordination point for heme.

This sequence belongs to the cytochrome P450 family. The cofactor is heme.

The protein localises to the endoplasmic reticulum membrane. It is found in the microsome membrane. Its function is as follows. May be involved in the metabolism of insect hormones and in the breakdown of synthetic insecticides. The polypeptide is Probable cytochrome P450 313b1 (Cyp313b1) (Drosophila melanogaster (Fruit fly)).